The primary structure comprises 258 residues: Lysine-rich coiled-coil protein 1 (258 aa).

Residues 142-258 (DNSTSTHQAS…MLWDQSILGF (117 aa)) form a disordered region. Over residues 150-161 (ASHKQIHQKRKR) the composition is skewed to basic residues. 3 stretches are compositionally biased toward basic and acidic residues: residues 162 to 175 (HPEE…EEWS), 183 to 213 (CKEI…TEKL), and 220 to 232 (KGRD…EERK). Residues 211–248 (EKLKNRKEKKGRDVVSKKEERKRTKKKKEQGQERTEEE) adopt a coiled-coil conformation.

This Pongo abelii (Sumatran orangutan) protein is Lysine-rich coiled-coil protein 1 (KRCC1).